A 369-amino-acid polypeptide reads, in one-letter code: Putative transport protein YueF (369 aa).

A run of 8 helical transmembrane segments spans residues 13 to 33 (ILFV…FQPF), 34 to 54 (IVFI…YFIF), 73 to 93 (LIYL…GPII), 159 to 179 (AVFG…FILF), 213 to 233 (DTLA…GTAC), 234 to 254 (FIGY…VMAI), 271 to 291 (VIVG…VVVI), and 316 to 336 (IILL…ILAV).

It belongs to the autoinducer-2 exporter (AI-2E) (TC 2.A.86) family.

It localises to the cell membrane. This chain is Putative transport protein YueF (yueF), found in Bacillus subtilis (strain 168).